Consider the following 261-residue polypeptide: Ribonuclease HII (261 aa).

Positions 71 to 259 (KYIAGVDEVG…VKEAKLHFDS (189 aa)) constitute an RNase H type-2 domain. Residues aspartate 77, glutamate 78, and aspartate 169 each contribute to the a divalent metal cation site.

This sequence belongs to the RNase HII family. It depends on Mn(2+) as a cofactor. The cofactor is Mg(2+).

Its subcellular location is the cytoplasm. It carries out the reaction Endonucleolytic cleavage to 5'-phosphomonoester.. In terms of biological role, endonuclease that specifically degrades the RNA of RNA-DNA hybrids. This is Ribonuclease HII from Listeria monocytogenes serotype 4b (strain F2365).